Reading from the N-terminus, the 190-residue chain is Shikimate kinase (190 aa).

19 to 24 contributes to the ATP binding site; sequence GSGKTT. Thr23 is a Mg(2+) binding site. Substrate-binding residues include Asp41, Arg65, and Gly87. Residue Arg124 coordinates ATP. Arg143 lines the substrate pocket.

This sequence belongs to the shikimate kinase family. As to quaternary structure, monomer. Mg(2+) is required as a cofactor.

The protein resides in the cytoplasm. It catalyses the reaction shikimate + ATP = 3-phosphoshikimate + ADP + H(+). It participates in metabolic intermediate biosynthesis; chorismate biosynthesis; chorismate from D-erythrose 4-phosphate and phosphoenolpyruvate: step 5/7. In terms of biological role, catalyzes the specific phosphorylation of the 3-hydroxyl group of shikimic acid using ATP as a cosubstrate. The polypeptide is Shikimate kinase (Synechococcus sp. (strain ATCC 27144 / PCC 6301 / SAUG 1402/1) (Anacystis nidulans)).